The chain runs to 207 residues: Large ribosomal subunit protein bL25 (207 aa).

The protein belongs to the bacterial ribosomal protein bL25 family. CTC subfamily. In terms of assembly, part of the 50S ribosomal subunit; part of the 5S rRNA/L5/L18/L25 subcomplex. Contacts the 5S rRNA. Binds to the 5S rRNA independently of L5 and L18.

Its function is as follows. This is one of the proteins that binds to the 5S RNA in the ribosome where it forms part of the central protuberance. The sequence is that of Large ribosomal subunit protein bL25 from Paraburkholderia xenovorans (strain LB400).